A 132-amino-acid polypeptide reads, in one-letter code: MVKNQTQKKGVKRKQVKNIPSGVVHVKATFNNTIVTITDPAGNVISWASAGKVGYSGSRKSSAFAATVAAQDAAKTAMSSGLKEVEVSLKGTGAGRESAVRALISSGLIVSVIRDETPVPHNGCRPRKRRRV.

It belongs to the universal ribosomal protein uS11 family. In terms of assembly, part of the 30S ribosomal subunit. Interacts with proteins S7 and S18. Binds to IF-3.

In terms of biological role, located on the platform of the 30S subunit, it bridges several disparate RNA helices of the 16S rRNA. Forms part of the Shine-Dalgarno cleft in the 70S ribosome. This chain is Small ribosomal subunit protein uS11, found in Chlamydia muridarum (strain MoPn / Nigg).